A 494-amino-acid polypeptide reads, in one-letter code: Tripartite motif-containing protein 5 (494 aa).

Ala-2 carries the N-acetylalanine modification. The RING-type zinc-finger motif lies at Cys-15 to Arg-59. Residue Ser-86 is modified to Phosphoserine. The segment at Gln-91–Val-132 adopts a B box-type zinc-finger fold. Zn(2+) is bound by residues Cys-96, His-99, Cys-118, and His-124. A coiled-coil region spans residues Leu-131–Val-223. The tract at residues Phe-186–Lys-199 is required for interaction with GABARAP and for autophagy. A B30.2/SPRY domain is found at Pro-280 to Ser-494.

This sequence belongs to the TRIM/RBCC family. In terms of assembly, can form homodimers and homotrimers. In addition to lower-order dimerization, also exhibits a higher-order multimerization and both low- and high-order multimerizations are essential for its restriction activity. Interacts with BTBD1 and BTBD2. Interacts with PSMC4, PSMC5, PSMD7 and HSPA8/HSC70. Interacts (via B30.2/SPRY domain) with HSPA1A/B. Interacts with PSMC2, MAP3K7/TAK1, TAB2 and TAB3. Interacts with SQSTM1. Interacts with TRIM6 and TRIM34. Interacts with ULK1 (phosphorylated form), GABARAP, GABARAPL1, GABARAPL2, MAP1LC3A, MAP1LC3C and BECN1. Post-translationally, degraded in a proteasome-independent fashion in the absence of viral infection but in a proteasome-dependent fashion following exposure to restriction sensitive virus. In terms of processing, autoubiquitinated in a RING finger- and UBE2D2-dependent manner. Monoubiquitinated by TRIM21. Deubiquitinated by Yersinia YopJ. Ubiquitination may not lead to proteasomal degradation.

The protein resides in the cytoplasm. Its subcellular location is the nucleus. The catalysed reaction is S-ubiquitinyl-[E2 ubiquitin-conjugating enzyme]-L-cysteine + [acceptor protein]-L-lysine = [E2 ubiquitin-conjugating enzyme]-L-cysteine + N(6)-ubiquitinyl-[acceptor protein]-L-lysine.. It participates in protein modification; protein ubiquitination. Capsid-specific restriction factor that prevents infection from non-host-adapted retroviruses. Blocks viral replication early in the life cycle, after viral entry but before reverse transcription. In addition to acting as a capsid-specific restriction factor, also acts as a pattern recognition receptor that activates innate immune signaling in response to the retroviral capsid lattice. Binding to the viral capsid triggers its E3 ubiquitin ligase activity, and in concert with the heterodimeric ubiquitin conjugating enzyme complex UBE2V1-UBE2N (also known as UBC13-UEV1A complex) generates 'Lys-63'-linked polyubiquitin chains, which in turn are catalysts in the autophosphorylation of the MAP3K7/TAK1 complex (includes TAK1, TAB2, and TAB3). Activation of the MAP3K7/TAK1 complex by autophosphorylation results in the induction and expression of NF-kappa-B and MAPK-responsive inflammatory genes, thereby leading to an innate immune response in the infected cell. Plays a role in regulating autophagy through activation of autophagy regulator BECN1 by causing its dissociation from its inhibitors BCL2 and TAB2. This Saguinus labiatus (Red-chested mustached tamarin) protein is Tripartite motif-containing protein 5 (TRIM5).